We begin with the raw amino-acid sequence, 182 residues long: Ribosome-recycling factor (182 aa).

Belongs to the RRF family.

It is found in the cytoplasm. Its function is as follows. Responsible for the release of ribosomes from messenger RNA at the termination of protein biosynthesis. May increase the efficiency of translation by recycling ribosomes from one round of translation to another. This Prochlorococcus marinus (strain MIT 9312) protein is Ribosome-recycling factor.